A 547-amino-acid chain; its full sequence is MAAKEVRFGDSARQAVISGVNVLADAVKVTLGPKGRNVVLERSYGAPTITKDGVSVAKEIELKDKFENMGAQMVKEVASKTSDTAGDGTTTATVLAQSIVKEGMRYVAAGMNPMDLKRGIEKAVTGAVEELKKLSKPCSTSKEIAQVGSISANSDTEIGRIIAEAMDKVGKEGVITVEDGSGLENELDVVEGMQFDRGYLSPYFVSSADKQIAALESPFVLLHDKKISNIRDLLPVLEQVAKAGKPLLIIAEDVDGEALATLVVNNIRGILKTCAVKAPGFGDRRKAMLEDIAILTGGTVIAEEVGLSLEKTRLEDLGQAKRIEVGKENTTIIDGAGDVKTIEARVAQIRKQIEEASSDYDREKLQERVAKLAGGVALIKVGAATEVEMKEKKARVEDALHATRAAVEEGIVPGGGVALLRTINAVSKIKGDNHDQDSGIKIVLRAMEEPLRQIVTNCGDEASVVVNKVKEGQGTFGYNAATGEYGDLVAMGVLDPTKVTRSALQNAASVAGLILTTDAMVAELPKEDSPGAGAGMGGMGGMGGMDM.

ATP is bound by residues 30–33, lysine 51, 87–91, glycine 415, 479–481, and aspartate 495; these read TLGP, DGTTT, and NAA. Residues 525–547 are disordered; the sequence is PKEDSPGAGAGMGGMGGMGGMDM. Residues 532-547 are compositionally biased toward gly residues; it reads AGAGMGGMGGMGGMDM.

The protein belongs to the chaperonin (HSP60) family. Forms a cylinder of 14 subunits composed of two heptameric rings stacked back-to-back. Interacts with the co-chaperonin GroES.

The protein resides in the cytoplasm. The enzyme catalyses ATP + H2O + a folded polypeptide = ADP + phosphate + an unfolded polypeptide.. In terms of biological role, together with its co-chaperonin GroES, plays an essential role in assisting protein folding. The GroEL-GroES system forms a nano-cage that allows encapsulation of the non-native substrate proteins and provides a physical environment optimized to promote and accelerate protein folding. This is Chaperonin GroEL from Nitrosomonas europaea (strain ATCC 19718 / CIP 103999 / KCTC 2705 / NBRC 14298).